Reading from the N-terminus, the 545-residue chain is Hydroxylamine reductase (545 aa).

[4Fe-4S] cluster is bound by residues Cys3, Cys6, Cys15, and Cys21. 8 residues coordinate hybrid [4Fe-2O-2S] cluster: His241, Glu265, Cys309, Cys396, Cys424, Cys449, Glu483, and Lys485. A Cysteine persulfide modification is found at Cys396.

The protein belongs to the HCP family. Requires [4Fe-4S] cluster as cofactor. Hybrid [4Fe-2O-2S] cluster is required as a cofactor.

Its subcellular location is the cytoplasm. It carries out the reaction A + NH4(+) + H2O = hydroxylamine + AH2 + H(+). Catalyzes the reduction of hydroxylamine to form NH(3) and H(2)O. The chain is Hydroxylamine reductase from Zymomonas mobilis subsp. mobilis (strain ATCC 31821 / ZM4 / CP4).